An 831-amino-acid polypeptide reads, in one-letter code: Heat shock 70 kDa protein 14 (831 aa).

Disordered stretches follow at residues E503–V579 and T786–T831. Residues V509 to S526 show a composition bias toward basic and acidic residues. Residue S533 is modified to Phosphoserine.

Belongs to the heat shock protein 70 (TC 1.A.33) family. HSP110/SSE subfamily. Interacts with HTT1 in both cytoplasm and nucleus. In terms of tissue distribution, constitutively expressed.

It is found in the cytoplasm. It localises to the nucleus. Functionally, in cooperation with other chaperones, Hsp70s are key components that facilitate folding of de novo synthesized proteins, assist translocation of precursor proteins into organelles, and are responsible for degradation of damaged protein under stress conditions. This Arabidopsis thaliana (Mouse-ear cress) protein is Heat shock 70 kDa protein 14 (HSP70-14).